We begin with the raw amino-acid sequence, 470 residues long: Asparagine--tRNA ligase (470 aa).

Belongs to the class-II aminoacyl-tRNA synthetase family. In terms of assembly, homodimer.

Its subcellular location is the cytoplasm. It carries out the reaction tRNA(Asn) + L-asparagine + ATP = L-asparaginyl-tRNA(Asn) + AMP + diphosphate + H(+). This chain is Asparagine--tRNA ligase, found in Blochmanniella floridana.